A 338-amino-acid chain; its full sequence is 2-oxoglutarate-dependent dioxygenase ecdG (338 aa).

The Fe2OG dioxygenase domain occupies 165–273 (PSVTNLGFLR…KYTLAYFVRP (109 aa)). Residues His-190, Asp-192, and His-249 each contribute to the Fe cation site. Lys-264 contacts 2-oxoglutarate.

This sequence belongs to the iron/ascorbate-dependent oxidoreductase family. The cofactor is Fe(2+).

Its pathway is antifungal biosynthesis. Functionally, 2-oxoglutarate-dependent dioxygenase; part of the gene cluster that mediates the biosynthesis of echinocandin B, a fungal lipidated cyclic hexapeptide that acts as an antifungal agent. Linoleoyl-AMP, produced by the fatty-acyl-AMP ligase ecdI, is transferred to the initiation carrier domain (T0) of ecdA. The linoleoyl-S-phosphopantetheinyl-T0 is sequentially extended with L-ornithine, L-threonine, L-proline, L-homotyrosine, L-threonine, and 4R-methyl-L-proline to form the linear hexapeptide. Thereafter, the terminal condensation (C7) performs macrocyclization of the NRPS product and the cyclic scaffold is released from ecdA. All six of the amino acid residues are hydroxylated, including 4R,5R-dihydroxy-L-ornithine, 4R-hydroxyl-L-proline, 3S,4S-dihydroxy-L-homotyrosine, and 3S-hydroxyl-4S-methyl-L-prolin. In the pathway, all the hydroxylation reactions are proposed to occur following completion of the cyclic peptide, so the unhydroxylated precursor produced by ecdA will undergo six rounds of hydroxylation. Five hydroxylase genes (ecdG, ecdH, ecdK, htyE and htyF) are embedded within the echinocandin B (ecd) and L-homotyrosine (hty) clusters. The chain is 2-oxoglutarate-dependent dioxygenase ecdG from Aspergillus rugulosus (Emericella rugulosa).